The sequence spans 89 residues: Small ribosomal subunit protein uS15 (89 aa).

Belongs to the universal ribosomal protein uS15 family. In terms of assembly, part of the 30S ribosomal subunit. Forms a bridge to the 50S subunit in the 70S ribosome, contacting the 23S rRNA.

One of the primary rRNA binding proteins, it binds directly to 16S rRNA where it helps nucleate assembly of the platform of the 30S subunit by binding and bridging several RNA helices of the 16S rRNA. In terms of biological role, forms an intersubunit bridge (bridge B4) with the 23S rRNA of the 50S subunit in the ribosome. This chain is Small ribosomal subunit protein uS15, found in Chromobacterium violaceum (strain ATCC 12472 / DSM 30191 / JCM 1249 / CCUG 213 / NBRC 12614 / NCIMB 9131 / NCTC 9757 / MK).